We begin with the raw amino-acid sequence, 892 residues long: Alanine--tRNA ligase (892 aa).

Zn(2+) contacts are provided by H574, H578, C677, and H681.

This sequence belongs to the class-II aminoacyl-tRNA synthetase family. Requires Zn(2+) as cofactor.

The protein resides in the cytoplasm. The catalysed reaction is tRNA(Ala) + L-alanine + ATP = L-alanyl-tRNA(Ala) + AMP + diphosphate. In terms of biological role, catalyzes the attachment of alanine to tRNA(Ala) in a two-step reaction: alanine is first activated by ATP to form Ala-AMP and then transferred to the acceptor end of tRNA(Ala). Also edits incorrectly charged Ser-tRNA(Ala) and Gly-tRNA(Ala) via its editing domain. The sequence is that of Alanine--tRNA ligase from Mesoplasma florum (strain ATCC 33453 / NBRC 100688 / NCTC 11704 / L1) (Acholeplasma florum).